A 137-amino-acid polypeptide reads, in one-letter code: Small ribosomal subunit protein uS9c (137 aa).

Belongs to the universal ribosomal protein uS9 family.

It localises to the plastid. The protein localises to the chloroplast. This Mesostigma viride (Green alga) protein is Small ribosomal subunit protein uS9c (rps9).